The sequence spans 150 residues: Suppressor of HU sensitivity involved in recombination protein 1 (150 aa).

As to quaternary structure, component of the SHU complex composed of at least CSM2, PSY3, SHU1 and SHU2.

The protein localises to the nucleus. Plays a role in a RAD51/RAD54-dependent homologous recombination repair (HRR) pathway to repair MMS-induced lesions during S-phase. The sequence is that of Suppressor of HU sensitivity involved in recombination protein 1 (SHU1) from Saccharomyces cerevisiae (strain ATCC 204508 / S288c) (Baker's yeast).